The sequence spans 381 residues: 1-deoxy-D-xylulose 5-phosphate reductoisomerase (381 aa).

The NADPH site is built by Thr-11, Gly-12, Ser-13, Ile-14, Asn-37, and Asn-121. A 1-deoxy-D-xylulose 5-phosphate-binding site is contributed by Lys-122. Glu-123 lines the NADPH pocket. A Mn(2+)-binding site is contributed by Asp-147. 1-deoxy-D-xylulose 5-phosphate contacts are provided by Ser-148, Glu-149, Ser-173, and His-196. Residue Glu-149 participates in Mn(2+) binding. Residue Gly-202 coordinates NADPH. Residues Ser-209, Asn-214, Lys-215, and Glu-218 each coordinate 1-deoxy-D-xylulose 5-phosphate. Glu-218 is a binding site for Mn(2+).

Belongs to the DXR family. The cofactor is Mg(2+). Requires Mn(2+) as cofactor.

It carries out the reaction 2-C-methyl-D-erythritol 4-phosphate + NADP(+) = 1-deoxy-D-xylulose 5-phosphate + NADPH + H(+). Its pathway is isoprenoid biosynthesis; isopentenyl diphosphate biosynthesis via DXP pathway; isopentenyl diphosphate from 1-deoxy-D-xylulose 5-phosphate: step 1/6. In terms of biological role, catalyzes the NADPH-dependent rearrangement and reduction of 1-deoxy-D-xylulose-5-phosphate (DXP) to 2-C-methyl-D-erythritol 4-phosphate (MEP). This Ruminiclostridium cellulolyticum (strain ATCC 35319 / DSM 5812 / JCM 6584 / H10) (Clostridium cellulolyticum) protein is 1-deoxy-D-xylulose 5-phosphate reductoisomerase.